We begin with the raw amino-acid sequence, 425 residues long: tRNA(Met) cytidine acetate ligase (425 aa).

ATP is bound by residues 7–20, G102, N165, and 190–191; these read IVEYNPFHNGHLYH and RI.

This sequence belongs to the TmcAL family.

The protein localises to the cytoplasm. The catalysed reaction is cytidine(34) in elongator tRNA(Met) + acetate + ATP = N(4)-acetylcytidine(34) in elongator tRNA(Met) + AMP + diphosphate. Its function is as follows. Catalyzes the formation of N(4)-acetylcytidine (ac(4)C) at the wobble position of elongator tRNA(Met), using acetate and ATP as substrates. First activates an acetate ion to form acetyladenylate (Ac-AMP) and then transfers the acetyl group to tRNA to form ac(4)C34. This chain is tRNA(Met) cytidine acetate ligase, found in Thermosipho melanesiensis (strain DSM 12029 / CIP 104789 / BI429).